The sequence spans 206 residues: Phosphoheptose isomerase (206 aa).

The SIS domain maps to 37 to 195 (LVDAFKAGKK…IEQKMDINNE (159 aa)). 52–54 (NGG) contacts substrate. Residues His-61 and Glu-65 each contribute to the Zn(2+) site. Residues Glu-65, 93-94 (ND), 119-121 (STS), Ser-124, and Gln-172 contribute to the substrate site. Zn(2+)-binding residues include Gln-172 and His-180.

It belongs to the SIS family. GmhA subfamily. In terms of assembly, homotetramer. Zn(2+) is required as a cofactor.

The protein resides in the cytoplasm. It catalyses the reaction 2 D-sedoheptulose 7-phosphate = D-glycero-alpha-D-manno-heptose 7-phosphate + D-glycero-beta-D-manno-heptose 7-phosphate. It participates in carbohydrate biosynthesis; D-glycero-D-manno-heptose 7-phosphate biosynthesis; D-glycero-alpha-D-manno-heptose 7-phosphate and D-glycero-beta-D-manno-heptose 7-phosphate from sedoheptulose 7-phosphate: step 1/1. In terms of biological role, catalyzes the isomerization of sedoheptulose 7-phosphate in D-glycero-D-manno-heptose 7-phosphate. The protein is Phosphoheptose isomerase of Hamiltonella defensa subsp. Acyrthosiphon pisum (strain 5AT).